The primary structure comprises 376 residues: CYP enzymes assisting alcohol dehydrogenase (376 aa).

Zn(2+) is bound by residues Cys43, Thr45, His64, Cys94, Cys97, Cys100, Cys108, and Cys173. Residue Thr45 participates in NAD(+) binding. Thr45 and His64 together coordinate substrate. NAD(+) is bound by residues 199 to 204 (GLGAVG), Asp223, Lys228, 294 to 296 (LGA), Phe320, and Lys371.

This sequence belongs to the zinc-containing alcohol dehydrogenase family. Class-III subfamily. As to quaternary structure, homodimer. The cofactor is Zn(2+).

It functions in the pathway alkaloid biosynthesis. May be a positive catalyzer of strictosidine production by assisting secologanin biosynthesis, thus being involved in monoterpene indole alkaloids accumulation. This is CYP enzymes assisting alcohol dehydrogenase from Catharanthus roseus (Madagascar periwinkle).